The following is a 681-amino-acid chain: Proton channel OTOP3 (681 aa).

The segment covering 1–25 (MLSKEEPACRQFHSREKTWGNEHNG) has biased composition (basic and acidic residues). Positions 1 to 26 (MLSKEEPACRQFHSREKTWGNEHNGK) are disordered. The Cytoplasmic segment spans residues 1–112 (MLSKEEPACR…LHQRAKKTGR (112 aa)). The helical transmembrane segment at 113–133 (LFSGLFGLNLMFLGGTVVSSV) threads the bilayer. Residues 134 to 143 (ALSNKAVPER) are Extracellular-facing. Residues 144-166 (DSQSFLCILMLLSSVWALYHLLF) form a helical membrane-spanning segment. Residues 167–182 (IRNQNGAVHHDHHAGA) lie on the Cytoplasmic side of the membrane. The helical transmembrane segment at 183 to 204 (MWLKASLAIFGVCSIILSIFEI) threads the bilayer. The Extracellular portion of the chain corresponds to 205 to 216 (GHALLLQNCEIL). Residues 217-240 (MDIVFFSIEIVFVSVQTVLLWVSC) form a helical membrane-spanning segment. The Cytoplasmic segment spans residues 241-248 (KDCVQMHH). The chain crosses the membrane as a helical span at residues 249–271 (SVTRYGIMLTLATDILLWLTAVI). The Extracellular segment spans residues 272-317 (DDSLEQDLEILQSNSTQDESNEMAQCQCPTDSMCWGLKQGYVTMFP). The helical transmembrane segment at 318–334 (FNIEYSLICATLLFIMW) threads the bilayer. Over 335-358 (KNVGRREKLHSDPPRHTFQLRGII) the chain is Cytoplasmic. The helical transmembrane segment at 359–378 (YGPLIGGAALLVGISVFVQY) threads the bilayer. At 379 to 392 (QVEATSGMVSILSY) the chain is on the extracellular side. The chain crosses the membrane as a helical span at residues 393 to 415 (HMYYGYKMIILAPMIVCSVAGII). The Cytoplasmic portion of the chain corresponds to 416 to 507 (AHSLREKEKK…QGKMKNYTRK (92 aa)). Residues 508 to 529 (LDVTLLFVSAVGQLGISYFSII) form a helical membrane-spanning segment. Topologically, residues 530-540 (ATVVTTPWTML) are extracellular. The helical transmembrane segment at 541–563 (SALNFSNSLLLILQYLSQTMFII) threads the bilayer. Topologically, residues 564 to 614 (ESMRSIHEEEKEKPGHHEESHRRMSVQEMHKAPPSCLDAGHLGLSRRVVKE) are cytoplasmic. The chain crosses the membrane as a helical span at residues 615 to 632 (MAMFLMICNIMCWILGAF). Residues 633-651 (GAHPLYMNGLERQLYGSGI) are Extracellular-facing. Residues 652 to 674 (WLAILNIGLPLSVFYRMHSVGIL) traverse the membrane as a helical segment. At 675-681 (LEVYLHA) the chain is on the cytoplasmic side.

Belongs to the otopetrin family. In terms of assembly, homodimer.

It localises to the cell membrane. It catalyses the reaction H(+)(in) = H(+)(out). Its activity is regulated as follows. pH regulates the proton channel activity from both sides of the plasma membrane. Low pH activates the channel from the extracellular side but inactivates the channel on the intracellular side. Zn(2+) and Ca(2+) can partially block the channel. In terms of biological role, proton-selective channel gated by extracellular protons. In Xenopus tropicalis (Western clawed frog), this protein is Proton channel OTOP3 (otop3).